Consider the following 311-residue polypeptide: Mitochondrial ribosome-associated GTPase 1 (311 aa).

One can recognise a CP-type G domain in the interval 27-200 (AKGLKQMKTK…LFDTPGVLSP (174 aa)). GTP is bound by residues 74-77 (NKMD), 144-149 (NVGKSS), and glycine 196.

Belongs to the TRAFAC class YlqF/YawG GTPase family. MTG1 subfamily.

The protein resides in the mitochondrion inner membrane. Functionally, plays a role in the regulation of the mitochondrial ribosome assembly and of translational activity. Displays mitochondrial GTPase activity. In Xenopus tropicalis (Western clawed frog), this protein is Mitochondrial ribosome-associated GTPase 1.